Here is a 288-residue protein sequence, read N- to C-terminus: Transposase InsF for insertion sequence IS3fB (288 aa).

The Integrase catalytic domain maps to 124-287 (YASGPNQKWA…SPEQFENQNL (164 aa)).

Belongs to the transposase IS3/IS150/IS904 family.

In terms of biological role, involved in the transposition of the insertion sequence IS3. This is Transposase InsF for insertion sequence IS3fB (insF7) from Escherichia coli (strain K12).